Consider the following 401-residue polypeptide: CCA-adding enzyme (401 aa).

ATP is bound by residues glycine 32 and arginine 35. Residues glycine 32 and arginine 35 each contribute to the CTP site. Positions 45 and 47 each coordinate Mg(2+). Positions 116, 159, 162, 165, and 168 each coordinate ATP. Residues arginine 116, aspartate 159, arginine 162, arginine 165, and arginine 168 each contribute to the CTP site.

Belongs to the tRNA nucleotidyltransferase/poly(A) polymerase family. Bacterial CCA-adding enzyme type 3 subfamily. In terms of assembly, homodimer. It depends on Mg(2+) as a cofactor.

The enzyme catalyses a tRNA precursor + 2 CTP + ATP = a tRNA with a 3' CCA end + 3 diphosphate. It carries out the reaction a tRNA with a 3' CCA end + 2 CTP + ATP = a tRNA with a 3' CCACCA end + 3 diphosphate. Its function is as follows. Catalyzes the addition and repair of the essential 3'-terminal CCA sequence in tRNAs without using a nucleic acid template. Adds these three nucleotides in the order of C, C, and A to the tRNA nucleotide-73, using CTP and ATP as substrates and producing inorganic pyrophosphate. tRNA 3'-terminal CCA addition is required both for tRNA processing and repair. Also involved in tRNA surveillance by mediating tandem CCA addition to generate a CCACCA at the 3' terminus of unstable tRNAs. While stable tRNAs receive only 3'-terminal CCA, unstable tRNAs are marked with CCACCA and rapidly degraded. The protein is CCA-adding enzyme of Leuconostoc mesenteroides subsp. mesenteroides (strain ATCC 8293 / DSM 20343 / BCRC 11652 / CCM 1803 / JCM 6124 / NCDO 523 / NBRC 100496 / NCIMB 8023 / NCTC 12954 / NRRL B-1118 / 37Y).